The following is a 397-amino-acid chain: Transcription factor xenB (397 aa).

Residues 220–249 (TISDFETGDRQTISRSDTNSEVRPIPESPS) are disordered. Polar residues predominate over residues 229–240 (RQTISRSDTNSE).

Transcription factor; part of the gene cluster that mediates the biosynthesis of xenoacremones such as xenoacremone A, a compound that shows inhibitory activity toward the PI3K/AKT signaling pathway and which has the ability to induce apoptosis of A549 lung cancer cells. Acts as a positive regulator of the xenoacremones biosynthesis gene cluster. The sequence is that of Transcription factor xenB from Xenoacremonium sinensis (Endophyte fungus).